The following is a 340-amino-acid chain: Heat-inducible transcription repressor HrcA (340 aa).

It belongs to the HrcA family.

In terms of biological role, negative regulator of class I heat shock genes (grpE-dnaK-dnaJ and groELS operons). Prevents heat-shock induction of these operons. The polypeptide is Heat-inducible transcription repressor HrcA (Mycoplasma mycoides subsp. mycoides SC (strain CCUG 32753 / NCTC 10114 / PG1)).